Consider the following 159-residue polypeptide: Ubiquitin-like protein ATG12 (159 aa).

Positions 1–40 (MASPQPPFGGGSNSNSNTASPSNNLSPTASPLLEGRDSPN) are disordered. Residues 13–27 (NSNSNTASPSNNLSP) show a composition bias toward low complexity. A Glycyl lysine isopeptide (Gly-Lys) (interchain with K-218 in ATG5) cross-link involves residue glycine 159.

It belongs to the ATG12 family. As to quaternary structure, forms a conjugate with ATG5. Forms a thioester bond with the 'Cys-116' of ATG10. Interacts with the ATG7 C-terminal 40 amino acids domain. The ATG12-ATG5 conjugate forms a complex with several units of ATG16. The ATG12-ATG5 conjugate also associates with ATG3.

It is found in the preautophagosomal structure membrane. The protein localises to the cytoplasm. Its function is as follows. Ubiquitin-like protein involved in cytoplasm to vacuole transport (Cvt), autophagy vesicles formation, mitophagy, and nucleophagy. Conjugation with ATG5 through a ubiquitin-like conjugating system involving also ATG7 as an E1-like activating enzyme and ATG10 as an E2-like conjugating enzyme, is essential for its function. The ATG12-ATG5 conjugate acts as an E3-like enzyme which is required for lipidation of ATG8 and ATG8 association to the vesicle membranes. ATG12-ATG5 rearranges the ATG3 catalytic center and enhances its E2 activity. Plays a role in sexual development and perithecia formation. The polypeptide is Ubiquitin-like protein ATG12 (Sordaria macrospora (strain ATCC MYA-333 / DSM 997 / K(L3346) / K-hell)).